A 255-amino-acid chain; its full sequence is Pimeloyl-[acyl-carrier protein] methyl ester esterase (255 aa).

The 226-residue stretch at 16–241 folds into the AB hydrolase-1 domain; it reads LVLLHGWGLN…AAHAPFISHP (226 aa). Residues Trp22, 81-82, and 142-146 contribute to the substrate site; these read SL and FLALQ. The active-site Nucleophile is Ser81. Catalysis depends on residues Asp206 and His234. His234 contacts substrate.

It belongs to the AB hydrolase superfamily. Carboxylesterase BioH family. In terms of assembly, monomer.

The protein resides in the cytoplasm. It carries out the reaction 6-carboxyhexanoyl-[ACP] methyl ester + H2O = 6-carboxyhexanoyl-[ACP] + methanol + H(+). It participates in cofactor biosynthesis; biotin biosynthesis. Its function is as follows. The physiological role of BioH is to remove the methyl group introduced by BioC when the pimeloyl moiety is complete. It allows to synthesize pimeloyl-ACP via the fatty acid synthetic pathway through the hydrolysis of the ester bonds of pimeloyl-ACP esters. Also displays a weak thioesterase activity. Can form a complex with CoA, and may be involved in the condensation of CoA and pimelic acid into pimeloyl-CoA, a precursor in biotin biosynthesis. This is Pimeloyl-[acyl-carrier protein] methyl ester esterase from Serratia marcescens.